The primary structure comprises 182 residues: Endoribonuclease YbeY (182 aa).

Residues His115, His119, and His125 each coordinate Zn(2+).

Belongs to the endoribonuclease YbeY family. Zn(2+) serves as cofactor.

It localises to the cytoplasm. Single strand-specific metallo-endoribonuclease involved in late-stage 70S ribosome quality control and in maturation of the 3' terminus of the 16S rRNA. This chain is Endoribonuclease YbeY, found in Bifidobacterium longum subsp. infantis (strain ATCC 15697 / DSM 20088 / JCM 1222 / NCTC 11817 / S12).